The primary structure comprises 344 residues: Protein RecA (344 aa).

66 to 73 (GPESSGKT) is an ATP binding site.

The protein belongs to the RecA family.

It is found in the cytoplasm. Its function is as follows. Can catalyze the hydrolysis of ATP in the presence of single-stranded DNA, the ATP-dependent uptake of single-stranded DNA by duplex DNA, and the ATP-dependent hybridization of homologous single-stranded DNAs. It interacts with LexA causing its activation and leading to its autocatalytic cleavage. The sequence is that of Protein RecA from Azoarcus sp. (strain BH72).